A 348-amino-acid chain; its full sequence is Flagellar P-ring protein (348 aa).

The N-terminal stretch at 1–16 (MRVLTIFLLFMTSIFA) is a signal peptide.

This sequence belongs to the FlgI family. In terms of assembly, the basal body constitutes a major portion of the flagellar organelle and consists of four rings (L,P,S, and M) mounted on a central rod.

Its subcellular location is the periplasm. The protein resides in the bacterial flagellum basal body. Assembles around the rod to form the L-ring and probably protects the motor/basal body from shearing forces during rotation. This is Flagellar P-ring protein from Campylobacter jejuni subsp. doylei (strain ATCC BAA-1458 / RM4099 / 269.97).